Here is a 464-residue protein sequence, read N- to C-terminus: ATP synthase subunit beta (464 aa).

An ATP-binding site is contributed by 151 to 158; that stretch reads GGAGVGKT.

The protein belongs to the ATPase alpha/beta chains family. As to quaternary structure, F-type ATPases have 2 components, CF(1) - the catalytic core - and CF(0) - the membrane proton channel. CF(1) has five subunits: alpha(3), beta(3), gamma(1), delta(1), epsilon(1). CF(0) has three main subunits: a(1), b(2) and c(9-12). The alpha and beta chains form an alternating ring which encloses part of the gamma chain. CF(1) is attached to CF(0) by a central stalk formed by the gamma and epsilon chains, while a peripheral stalk is formed by the delta and b chains.

The protein localises to the cell membrane. It catalyses the reaction ATP + H2O + 4 H(+)(in) = ADP + phosphate + 5 H(+)(out). Produces ATP from ADP in the presence of a proton gradient across the membrane. The catalytic sites are hosted primarily by the beta subunits. The sequence is that of ATP synthase subunit beta from Bacillus cytotoxicus (strain DSM 22905 / CIP 110041 / 391-98 / NVH 391-98).